The chain runs to 366 residues: Histidinol-phosphate aminotransferase 2 (366 aa).

Polar residues predominate over residues 1–11 (MQVKDQLSSLQ). Residues 1–21 (MQVKDQLSSLQPYKPGKSPEQ) form a disordered region. Lys222 carries the post-translational modification N6-(pyridoxal phosphate)lysine.

It belongs to the class-II pyridoxal-phosphate-dependent aminotransferase family. Histidinol-phosphate aminotransferase subfamily. In terms of assembly, homodimer. It depends on pyridoxal 5'-phosphate as a cofactor.

It catalyses the reaction L-histidinol phosphate + 2-oxoglutarate = 3-(imidazol-4-yl)-2-oxopropyl phosphate + L-glutamate. The protein operates within amino-acid biosynthesis; L-histidine biosynthesis; L-histidine from 5-phospho-alpha-D-ribose 1-diphosphate: step 7/9. The polypeptide is Histidinol-phosphate aminotransferase 2 (Bacillus cereus (strain ATCC 10987 / NRS 248)).